The chain runs to 203 residues: Akirin-2 (203 aa).

Phosphoserine occurs at positions 18 and 21. The short motif at 22–27 (PKRRRC) is the Nuclear localization signal element. Ser-57 bears the Phosphoserine mark. The disordered stretch occupies residues 115 to 137 (PHAFLLSGPASPGTPSGTSSPLK). Low complexity predominate over residues 119–135 (LLSGPASPGTPSGTSSP). An SYVS motif motif is present at residues 200-203 (SYVS).

Belongs to the akirin family. Homodimer. Interacts with IPO9; the interaction is direct. Associates with 20S and 26S proteasomes. Interacts with SMARCD1; promoting SWI/SNF complex recruitment. Interacts with NFKBIZ. Interacts with YWHAB. Polyubiquitinated. Polyubiquitination is dependent of UBR5 that extends pre-ubiquitinated AKIRIN2.

The protein localises to the nucleus. The protein resides in the cytoplasm. It localises to the membrane. Functionally, molecular adapter that acts as a bridge between a variety of multiprotein complexes, and which is involved in embryonic development, immunity, myogenesis and brain development. Plays a key role in nuclear protein degradation by promoting import of proteasomes into the nucleus: directly binds to fully assembled 20S proteasomes at one end and to nuclear import receptor IPO9 at the other end, bridging them together and mediating the import of pre-assembled proteasome complexes through the nuclear pore. Involved in innate immunity by regulating the production of interleukin-6 (IL6) downstream of Toll-like receptor (TLR): acts by bridging the NF-kappa-B inhibitor NFKBIZ and the SWI/SNF complex, leading to promote induction of IL6. Also involved in adaptive immunity by promoting B-cell activation. Involved in brain development: required for the survival and proliferation of cerebral cortical progenitor cells. Involved in myogenesis: required for skeletal muscle formation and skeletal development, possibly by regulating expression of muscle differentiation factors. This Bos taurus (Bovine) protein is Akirin-2.